Consider the following 513-residue polypeptide: L-arabinose transport ATP-binding protein AraG (513 aa).

ABC transporter domains are found at residues 6–243 (LEMR…GMVG) and 264–508 (VKNW…TKTA). Residue 38 to 45 (GENGAGKS) participates in ATP binding.

Belongs to the ABC transporter superfamily.

It localises to the cell membrane. The enzyme catalyses L-arabinose(out) + ATP + H2O = L-arabinose(in) + ADP + phosphate + H(+). Its function is as follows. Part of the binding-protein-dependent transport system for L-arabinose. Probably responsible for energy coupling to the transport system. The protein is L-arabinose transport ATP-binding protein AraG (araG) of Geobacillus stearothermophilus (Bacillus stearothermophilus).